Here is an 831-residue protein sequence, read N- to C-terminus: DNA helicase MCM8 (831 aa).

The segment covering Met1–Pro20 has biased composition (gly residues). The disordered stretch occupies residues Met1–Pro53. The MCM domain maps to Leu395–Val602. Gly447–Ser454 is an ATP binding site.

The protein belongs to the MCM family. As to quaternary structure, component of the MCM8-MCM9 complex, which forms a hexamer composed of mcm8 and mcm9.

Its subcellular location is the nucleus. It catalyses the reaction ATP + H2O = ADP + phosphate + H(+). In terms of biological role, component of the MCM8-MCM9 complex, a complex involved in homologous recombination repair following DNA interstrand cross-links and plays a key role during gametogenesis. The MCM8-MCM9 complex probably acts as a hexameric helicase required to process aberrant forks into homologous recombination substrates and to orchestrate homologous recombination with resection, fork stabilization and fork restart. In eggs, required for elongation during DNA replication by facilitating the recruitment of rpa2/rpa34 and stimulating the processivity of DNA polymerases at replication foci. Probably not required for DNA replication in other cells. This is DNA helicase MCM8 (mcm8) from Xenopus laevis (African clawed frog).